Reading from the N-terminus, the 217-residue chain is Protein-L-isoaspartate O-methyltransferase (217 aa).

Residue S64 is part of the active site.

Belongs to the methyltransferase superfamily. L-isoaspartyl/D-aspartyl protein methyltransferase family.

The protein localises to the cytoplasm. The catalysed reaction is [protein]-L-isoaspartate + S-adenosyl-L-methionine = [protein]-L-isoaspartate alpha-methyl ester + S-adenosyl-L-homocysteine. Catalyzes the methyl esterification of L-isoaspartyl residues in peptides and proteins that result from spontaneous decomposition of normal L-aspartyl and L-asparaginyl residues. It plays a role in the repair and/or degradation of damaged proteins. The protein is Protein-L-isoaspartate O-methyltransferase of Azorhizobium caulinodans (strain ATCC 43989 / DSM 5975 / JCM 20966 / LMG 6465 / NBRC 14845 / NCIMB 13405 / ORS 571).